We begin with the raw amino-acid sequence, 145 residues long: Large ribosomal subunit protein uL15 (145 aa).

The interval 1–50 (MLHTIKPVTNARKSTKRLGRGPGSGTGKTSGKGHKGQLARSGKTLRPGFE) is disordered. Gly residues predominate over residues 20-30 (RGPGSGTGKTS).

This sequence belongs to the universal ribosomal protein uL15 family. As to quaternary structure, part of the 50S ribosomal subunit.

Its function is as follows. Binds to the 23S rRNA. This Aster yellows witches'-broom phytoplasma (strain AYWB) protein is Large ribosomal subunit protein uL15.